The primary structure comprises 124 residues: U33-theraphotoxin-Cg1a (124 aa).

The signal sequence occupies residues 1–17; the sequence is MKFAVAIAFTLLVCVFA. Intrachain disulfides connect Cys-26/Cys-37, Cys-31/Cys-51, Cys-36/Cys-75, Cys-61/Cys-83, and Cys-77/Cys-94. Basic and acidic residues predominate over residues 93–108; that stretch reads RCQEESGKSDKSKESQ. Positions 93–124 are disordered; the sequence is RCQEESGKSDKSKESQGSDESEESEESKESCG. Acidic residues predominate over residues 109-118; sequence GSDESEESEE.

It belongs to the neurotoxin 32 family. In terms of tissue distribution, expressed by the venom gland.

It is found in the secreted. The chain is U33-theraphotoxin-Cg1a from Chilobrachys guangxiensis (Chinese earth tiger tarantula).